The chain runs to 214 residues: MSSESTKNRHRSSKRTPSPLQKERKRNWENRKSRSRSPIRRHGEKNLEYAHHNNQDNRQSSYTASKTSDQAMKTKEKTSGGTRTNPYTVFSQHRANHSNAPGWCGFYWHSTRLARNGTNNIFNEMKQKFQELQIDGKISWDTTRELLFTQKKTLDQGYRNMLYHFRHSPDCPRCDYWDDVYRKHLANVSSQESEEVTDEEMLSAVESMETNASN.

2 disordered regions span residues 1-85 (MSSE…TRTN) and 192-214 (ESEE…NASN). Residues 33-43 (SRSRSPIRRHG) show a composition bias toward basic residues. Positions 44 to 55 (EKNLEYAHHNNQ) are enriched in basic and acidic residues. A compositionally biased stretch (polar residues) spans 56 to 71 (DNRQSSYTASKTSDQA). The span at 192–201 (ESEEVTDEEM) shows a compositional bias: acidic residues.

It belongs to the Bocaparvovirus Non-structural protein NP-1 family.

It is found in the host nucleus. Required for the expression of the capsid proteins. Performs the splicing and internal polyadenylation of the viral capsid-encoding mRNA precursor, which allows its maturation and expression. Transactivates the viral promoter. This is Non-structural protein NP-1 (NP1) from Human bocavirus 4 (HBoV4).